A 904-amino-acid chain; its full sequence is Phosphoenolpyruvate carboxylase (904 aa).

Residues histidine 151 and lysine 570 contribute to the active site.

This sequence belongs to the PEPCase type 1 family. Requires Mg(2+) as cofactor.

It carries out the reaction oxaloacetate + phosphate = phosphoenolpyruvate + hydrogencarbonate. In terms of biological role, forms oxaloacetate, a four-carbon dicarboxylic acid source for the tricarboxylic acid cycle. The chain is Phosphoenolpyruvate carboxylase from Xanthomonas campestris pv. campestris (strain ATCC 33913 / DSM 3586 / NCPPB 528 / LMG 568 / P 25).